The sequence spans 258 residues: NAD kinase (258 aa).

The Proton acceptor role is filled by aspartate 51. NAD(+)-binding positions include aspartate 51 to glycine 52, arginine 56, asparagine 119 to aspartate 120, lysine 130, aspartate 149, threonine 160 to serine 165, and alanine 184.

Belongs to the NAD kinase family. It depends on a divalent metal cation as a cofactor.

It is found in the cytoplasm. The enzyme catalyses NAD(+) + ATP = ADP + NADP(+) + H(+). Involved in the regulation of the intracellular balance of NAD and NADP, and is a key enzyme in the biosynthesis of NADP. Catalyzes specifically the phosphorylation on 2'-hydroxyl of the adenosine moiety of NAD to yield NADP. This chain is NAD kinase, found in Thermotoga neapolitana (strain ATCC 49049 / DSM 4359 / NBRC 107923 / NS-E).